Consider the following 436-residue polypeptide: L-threonine dehydratase biosynthetic IlvA (436 aa).

A catalytic region spans residues 1–357 (MSETYVSEKS…HRGLKHYFLV (357 aa)). At lysine 70 the chain carries N6-(pyridoxal phosphate)lysine. Residues asparagine 97, 203–207 (GGGGL), and serine 329 contribute to the pyridoxal 5'-phosphate site. The ACT-like domain maps to 353 to 427 (HYFLVNFPQK…SAIDSRRLEP (75 aa)). The regulatory stretch occupies residues 358 to 436 (NFPQKPGQLR…PGTPEYEYLT (79 aa)).

This sequence belongs to the serine/threonine dehydratase family. In terms of assembly, homotetramer. Requires pyridoxal 5'-phosphate as cofactor.

The enzyme catalyses L-threonine = 2-oxobutanoate + NH4(+). It functions in the pathway amino-acid biosynthesis; L-isoleucine biosynthesis; 2-oxobutanoate from L-threonine: step 1/1. In terms of biological role, catalyzes the anaerobic formation of alpha-ketobutyrate and ammonia from threonine in a two-step reaction. The first step involved a dehydration of threonine and a production of enamine intermediates (aminocrotonate), which tautomerizes to its imine form (iminobutyrate). Both intermediates are unstable and short-lived. The second step is the nonenzymatic hydrolysis of the enamine/imine intermediates to form 2-ketobutyrate and free ammonia. In the low water environment of the cell, the second step is accelerated by RidA. The protein is L-threonine dehydratase biosynthetic IlvA (ilvA) of Corynebacterium glutamicum (strain ATCC 13032 / DSM 20300 / JCM 1318 / BCRC 11384 / CCUG 27702 / LMG 3730 / NBRC 12168 / NCIMB 10025 / NRRL B-2784 / 534).